The primary structure comprises 1146 residues: Probable phospholipid-transporting ATPase IIB (1146 aa).

Residues 1–143 are Cytoplasmic-facing; it reads MADQIPLYPV…IKNQKYNVFT (143 aa). Residues 144 to 164 form a helical membrane-spanning segment; sequence FIPGVLYEQFKFFLNLYFLVV. Residues 165 to 172 lie on the Extracellular side of the membrane; it reads SCSQFVPA. A helical transmembrane segment spans residues 173–193; sequence LKIGYLYTYWAPLGFVLAVTI. Topologically, residues 194-381 are cytoplasmic; sequence AREAIDEFRR…LDLELNQLTK (188 aa). A helical transmembrane segment spans residues 382-402; it reads ALFLALVVLSVVMVTLQGFAG. Over 403–407 the chain is Extracellular; sequence PWYRN. A helical transmembrane segment spans residues 408 to 427; it reads LFRFLLLFSYIIPISLRVNL. Over 428–938 the chain is Cytoplasmic; it reads DMGKAAYGWM…ALGQFVMHRG (511 aa). Asp-467 serves as the catalytic 4-aspartylphosphate intermediate. ATP contacts are provided by Asp-467, Lys-468, and Thr-469. Asp-467 lines the Mg(2+) pocket. Thr-469 is a Mg(2+) binding site. Residues 508 to 519 show a composition bias toward polar residues; that stretch reads VHSQPSGHNPSS. Residues 508–535 form a disordered region; that stretch reads VHSQPSGHNPSSAPLRRSQSSTPKVKKS. ATP is bound by residues Glu-590, Phe-632, Lys-637, Lys-656, Arg-685, Thr-686, Thr-765, Gly-766, Asp-767, Arg-847, and Lys-853. Asp-873 contributes to the Mg(2+) binding site. ATP-binding residues include Asn-876 and Asp-877. Residue Asp-877 coordinates Mg(2+). Residues 939–959 traverse the membrane as a helical segment; it reads LIISTMQAVFSSVFYFASVPL. Over 960–961 the chain is Extracellular; sequence YQ. Residues 962-982 form a helical membrane-spanning segment; it reads GFLMVGYATIYTMFPVFSLVL. The Cytoplasmic segment spans residues 983-1011; that stretch reads DQDVKPEMAILYPELYKDLTKGRSLSFKT. Residues 1012–1032 form a helical membrane-spanning segment; sequence FLIWVLISIYQGGILMYGALL. At 1033 to 1040 the chain is on the extracellular side; that stretch reads LFEDEFVH. A helical membrane pass occupies residues 1041-1061; that stretch reads VVAISFTALILTELLMVALTI. Over 1062-1065 the chain is Cytoplasmic; that stretch reads RTWH. A helical membrane pass occupies residues 1066 to 1086; it reads WLMVVAEFLSLGCYVASLAFL. Residues 1087 to 1105 are Extracellular-facing; it reads NEYFGIGRVSFGAFLDVAF. Residues 1106-1128 form a helical membrane-spanning segment; it reads ITTVTFLWKVSAITVVSCLPLYV. Topologically, residues 1129–1146 are cytoplasmic; the sequence is LKYLKRKLSPPSYSKLSS.

Belongs to the cation transport ATPase (P-type) (TC 3.A.3) family. Type IV subfamily. Mg(2+) serves as cofactor. As to expression, found in most tissues except spleen and muscle. Most abundant in testis. Also detected in fetal tissues.

The protein localises to the golgi apparatus. The protein resides in the trans-Golgi network membrane. The enzyme catalyses ATP + H2O + phospholipidSide 1 = ADP + phosphate + phospholipidSide 2.. This chain is Probable phospholipid-transporting ATPase IIB (Atp9b), found in Mus musculus (Mouse).